Here is a 1685-residue protein sequence, read N- to C-terminus: PHD and RING finger domain-containing protein 1 (1685 aa).

Residues 1 to 82 (MDDDNLDELV…GSEDSEDGIE (82 aa)) are disordered. Residues 41–81 (DSEDDTGSEQDDDTDGEETEGLSEEEDPEDRSGSEDSEDGI) are compositionally biased toward acidic residues. Residues 109-150 (CPICLNAFRDQAVGTPETCAHYFCLDCIIEWSRNANSCPVDR) form an RING-type; degenerate zinc finger. A PHD-type zinc finger spans residues 188–238 (PTFCEVCGRSDREDRLLLCDGCDAGYHMECLDPPLQEVPVDEWFCPECAVP). Disordered stretches follow at residues 333-390 (PLTP…KLKN), 449-483 (DSNG…VARP), 537-590 (SAKR…GLSC), 606-777 (TPVR…GSSF), and 809-860 (KVQR…LLPS). The residue at position 335 (T335) is a Phosphothreonine. Composition is skewed to basic residues over residues 339 to 364 (PAKR…RSSV) and 372 to 387 (RAKK…KGRK). Phosphoserine occurs at positions 450 and 460. 2 stretches are compositionally biased toward polar residues: residues 606 to 625 (TPVR…GNLS) and 637 to 662 (SPRL…NFPS). Residues 671–682 (QKTDPRRPDFSK) are compositionally biased toward basic and acidic residues. Composition is skewed to polar residues over residues 694–709 (SNST…QTVE) and 737–751 (SSRG…TSGS). A phosphoserine mark is found at S817, S848, S849, S867, S870, S922, S948, S984, and S1002. Residues 835 to 860 (PFDPTGSDSSPPSSSPESLGSGLLPS) show a composition bias toward low complexity. Disordered stretches follow at residues 892–1229 (GTEM…VSEV), 1290–1355 (QLDD…APSD), and 1369–1390 (TTLS…SGRG). The span at 922-934 (SDLEQEGLGEIEP) shows a compositional bias: acidic residues. The span at 1001–1010 (SSRSRSTSSS) shows a compositional bias: low complexity. Composition is skewed to basic residues over residues 1011–1031 (RSRK…RTRS) and 1054–1064 (KRHRAKTKSRR). The segment covering 1065-1075 (SSSDRASSQDR) has biased composition (basic and acidic residues). 2 stretches are compositionally biased toward basic residues: residues 1089-1102 (GPWG…KSRS) and 1117-1129 (SRRR…GSRS). Composition is skewed to basic and acidic residues over residues 1130 to 1143 (RGRD…LERD) and 1151 to 1165 (RSRE…MTRS). Phosphoserine is present on residues S1135 and S1139. The segment covering 1181–1191 (RTRRPHSREKH) has biased composition (basic residues). The span at 1192-1201 (PHSPEKKGAV) shows a compositional bias: basic and acidic residues. Residue S1205 is modified to Phosphoserine. The segment covering 1292–1305 (DDMSSPPSPESTDS) has biased composition (low complexity). S1372 and S1383 each carry phosphoserine. At T1416 the chain carries Phosphothreonine. 3 disordered regions span residues 1421–1448 (EAEA…EGDW), 1466–1501 (LPPP…VGTL), and 1569–1591 (LAVP…AEKT). Basic and acidic residues predominate over residues 1577 to 1591 (SEERTATPKTAAEKT). Positions 1589–1615 (EKTKKEEYMKKLHMQERAVEEVKLAIK) form a coiled coil.

In terms of assembly, interacts with POLR2A (via the C-terminal domain).

The sequence is that of PHD and RING finger domain-containing protein 1 from Rattus norvegicus (Rat).